The sequence spans 274 residues: Large ribosomal subunit protein uL2cz/uL2cy (274 aa).

Disordered regions lie at residues 1 to 20 (MAIHLYKTSTPSTRNGAVDS) and 223 to 274 (MNPV…RRSK).

This sequence belongs to the universal ribosomal protein uL2 family. Part of the 50S ribosomal subunit.

It localises to the plastid. The protein resides in the chloroplast. The sequence is that of Large ribosomal subunit protein uL2cz/uL2cy (rpl2-A) from Eucalyptus globulus subsp. globulus (Tasmanian blue gum).